We begin with the raw amino-acid sequence, 122 residues long: Protein translocase subunit SecE (122 aa).

3 helical membrane-spanning segments follow: residues 14–34 (LLKW…NQYF), 38–58 (PILY…FLAL), and 93–113 (LIVV…DSLL).

It belongs to the SecE/SEC61-gamma family. Component of the Sec protein translocase complex. Heterotrimer consisting of SecY, SecE and SecG subunits. The heterotrimers can form oligomers, although 1 heterotrimer is thought to be able to translocate proteins. Interacts with the ribosome. Interacts with SecDF, and other proteins may be involved. Interacts with SecA.

It is found in the cell inner membrane. Essential subunit of the Sec protein translocation channel SecYEG. Clamps together the 2 halves of SecY. May contact the channel plug during translocation. This Pseudomonas aeruginosa (strain ATCC 15692 / DSM 22644 / CIP 104116 / JCM 14847 / LMG 12228 / 1C / PRS 101 / PAO1) protein is Protein translocase subunit SecE.